The sequence spans 346 residues: Eukaryotic translation initiation factor 3 subunit I (346 aa).

WD repeat units follow at residues 8–47 (GHERSLTQVKYNREGDLIFTSGKDNVASVWYAMNGERLGT), 50–89 (GHNGSIWSIDVDQHTEYAVTGSADFSVKVWRVRDGSIAHS), 150–189 (EGCAPVLVASWSYDGKYIVAGHQDGKISKYNGVTGECLEI), 192–233 (LHKQ…KTYE), and 289–328 (DHFGPVNYIAVSPQGTSYASGGEDGFVRLHHFDKSYFDFK).

Belongs to the eIF-3 subunit I family. Component of the eukaryotic translation initiation factor 3 (eIF-3) complex.

The protein resides in the cytoplasm. In terms of biological role, component of the eukaryotic translation initiation factor 3 (eIF-3) complex, which is involved in protein synthesis of a specialized repertoire of mRNAs and, together with other initiation factors, stimulates binding of mRNA and methionyl-tRNAi to the 40S ribosome. The eIF-3 complex specifically targets and initiates translation of a subset of mRNAs involved in cell proliferation. The chain is Eukaryotic translation initiation factor 3 subunit I from Eremothecium gossypii (strain ATCC 10895 / CBS 109.51 / FGSC 9923 / NRRL Y-1056) (Yeast).